Consider the following 290-residue polypeptide: Poly-beta-1,6-N-acetyl-D-glucosamine N-deacetylase (290 aa).

Residues 1-28 (MKYRKLIILVLSILIILPVSTLDGHHIA) form the signal peptide. The 177-residue stretch at 114 to 290 (RSVWINFDDM…KRWDGFHEKD (177 aa)) folds into the NodB homology domain.

It belongs to the polysaccharide deacetylase family.

The protein resides in the secreted. The protein localises to the cell wall. In terms of biological role, catalyzes the N-deacetylation of poly-beta-1,6-N-acetyl-D-glucosamine (PNAG, also referred to as PIA), a biofilm adhesin polysaccharide. N-deacetylation is crucial for attachment of the polysaccharide to the bacterial cell surface; it leads to the introduction of positive charges in the otherwise neutral PIA polymer, allowing electrostatic interactions. The chain is Poly-beta-1,6-N-acetyl-D-glucosamine N-deacetylase (icaB) from Staphylococcus aureus (strain Mu50 / ATCC 700699).